The sequence spans 470 residues: MTVPINASTSQDVEAPPRPKDVGILAIEMYFPKRCISEEELEAFDSVSKGKYTIGLGQKFMACCDDREDINTFALTAMTSLIEKYNVDPKSIGRIDVGTETIIDKSKSTKTHLMDYFAEAGNTDVEGVDSKNACYGSTAALFNAVNWIESSSWDGRNAIVVGGDIAIYAEGSGRPTGGAGAVAMLIGPNAPLVLEPIHGTHMANTYDFYKPKLDSEYPEVDGQLSITTYISAIDASYAAYRAKHAKAKKAAGLGGPAFSLADVDYPVFHSPYGKMVQKAHARLVYNDFLANPDAPRYAQVPERAAWLAQPYKASLTDKTLEKTFMGVAKAQFDGTVEKGMRCARRCGNMYTASLYGGLASLLASVEPAEIRGKRISMFAFGSGLASSFFTIKVKGDTTEVQEKLDLIRRLESMDVVPCQAYVDSLALREKNHNAGSYVPEGSIDNIWPGGYYLESIDSKYRRKYIRAPKA.

The active-site Proton donor/acceptor is Glu-100. Cys-134 acts as the Acyl-thioester intermediate in catalysis. (3S)-3-hydroxy-3-methylglutaryl-CoA-binding residues include Cys-134, Thr-176, Ser-225, His-269, Lys-278, Asn-348, and Ser-382. Catalysis depends on His-269, which acts as the Proton donor/acceptor.

The protein belongs to the thiolase-like superfamily. HMG-CoA synthase family.

It catalyses the reaction acetoacetyl-CoA + acetyl-CoA + H2O = (3S)-3-hydroxy-3-methylglutaryl-CoA + CoA + H(+). It functions in the pathway metabolic intermediate biosynthesis; (R)-mevalonate biosynthesis; (R)-mevalonate from acetyl-CoA: step 2/3. Hydroxymethylglutaryl-CoA synthase; part of the first module of ergosterol biosynthesis pathway that includes the early steps of the pathway, conserved across all eukaryotes, and which results in the formation of mevalonate from acetyl-coenzyme A (acetyl-CoA). This module also plays a key role in the biosynthesis of triterpenes such as ganoderic acids (GA), a group of highly oxygenated lanostane-type triterpenoids which are well recognized as a main group of unique bioactive compounds in the medicinal mushroom Ganoderma lucidum. In this module, the acetyl-CoA acetyltransferase catalyzes the formation of acetoacetyl-CoA. The hydroxymethylglutaryl-CoA synthase HMGS then condenses acetyl-CoA with acetoacetyl-CoA to form HMG-CoA. The rate-limiting step of the early module is the reduction to mevalonate by the 3-hydroxy-3-methylglutaryl-coenzyme A (HMG-CoA) reductase. In Ganoderma lucidum (Ling zhi medicinal fungus), this protein is Hydroxymethylglutaryl-CoA synthase.